The sequence spans 206 residues: Large ribosomal subunit protein mL62 (206 aa).

The transit peptide at 1-29 directs the protein to the mitochondrion; it reads MAATRCLRWGLSRAGVWLLPPPARCPRRA. Position 90 is an N5-methylglutamine (Q90).

Belongs to the prokaryotic/mitochondrial release factor family. Mitochondrion-specific ribosomal protein mL62 subfamily. As to quaternary structure, component of the mitochondrial large ribosomal subunit (mt-LSU). Mature mammalian 55S mitochondrial ribosomes consist of a small (28S) and a large (39S) subunit. The 28S small subunit contains a 12S ribosomal RNA (12S mt-rRNA) and 30 different proteins. The 39S large subunit contains a 16S rRNA (16S mt-rRNA), a copy of mitochondrial valine transfer RNA (mt-tRNA(Val)), which plays an integral structural role, and 52 different proteins. Methylation of glutamine in the GGQ triplet by HEMK1. As to expression, down-regulated during the in vitro differentiation of HT29-D4 colon carcinoma cells.

The protein localises to the mitochondrion. The catalysed reaction is an N-acyl-L-alpha-aminoacyl-tRNA + H2O = an N-acyl-L-amino acid + a tRNA + H(+). In terms of biological role, essential peptidyl-tRNA hydrolase component of the mitochondrial large ribosomal subunit. Acts as a codon-independent translation release factor that has lost all stop codon specificity and directs the termination of translation in mitochondrion, possibly in case of abortive elongation. Involved in the hydrolysis of peptidyl-tRNAs that have been prematurely terminated and thus in the recycling of stalled mitochondrial ribosomes. The sequence is that of Large ribosomal subunit protein mL62 from Homo sapiens (Human).